Here is a 604-residue protein sequence, read N- to C-terminus: Glutamine--fructose-6-phosphate aminotransferase [isomerizing] (604 aa).

Cysteine 2 acts as the Nucleophile; for GATase activity in catalysis. One can recognise a Glutamine amidotransferase type-2 domain in the interval 2-218; the sequence is CGIVGVVGNR…DKELVVLTKD (217 aa). SIS domains follow at residues 284–423 and 456–594; these read IVKS…ANGK and VANL…VDKP. The active-site For Fru-6P isomerization activity is lysine 599.

As to quaternary structure, homodimer.

It localises to the cytoplasm. It carries out the reaction D-fructose 6-phosphate + L-glutamine = D-glucosamine 6-phosphate + L-glutamate. Catalyzes the first step in hexosamine metabolism, converting fructose-6P into glucosamine-6P using glutamine as a nitrogen source. This chain is Glutamine--fructose-6-phosphate aminotransferase [isomerizing], found in Streptococcus mutans serotype c (strain ATCC 700610 / UA159).